The sequence spans 730 residues: Elongation factor 2 (730 aa).

One can recognise a tr-type G domain in the interval Lys19–Phe260. Residues Ala28 to Thr35, Asp94 to His98, and Asn148 to Asp151 each bind GTP. His597 carries the diphthamide modification.

It belongs to the TRAFAC class translation factor GTPase superfamily. Classic translation factor GTPase family. EF-G/EF-2 subfamily.

The protein localises to the cytoplasm. In terms of biological role, catalyzes the GTP-dependent ribosomal translocation step during translation elongation. During this step, the ribosome changes from the pre-translocational (PRE) to the post-translocational (POST) state as the newly formed A-site-bound peptidyl-tRNA and P-site-bound deacylated tRNA move to the P and E sites, respectively. Catalyzes the coordinated movement of the two tRNA molecules, the mRNA and conformational changes in the ribosome. The polypeptide is Elongation factor 2 (Methanosphaerula palustris (strain ATCC BAA-1556 / DSM 19958 / E1-9c)).